A 397-amino-acid chain; its full sequence is Protein WRKY1 (397 aa).

A DNA-binding region (WRKY) is located at residues 326–392; it reads KVADIPADEF…YEGDHNHNRV (67 aa).

This sequence belongs to the WRKY group II-d family. In terms of assembly, interacts with RS2. As to expression, more abundant in apices and young leaf primordia than in fully expanded leaf tissues.

It is found in the nucleus. In terms of biological role, transcription factor. Interacts specifically with the W box (5'-(T)TGAC[CT]-3'), a frequently occurring elicitor-responsive cis-acting element. The sequence is that of Protein WRKY1 from Zea mays (Maize).